Reading from the N-terminus, the 453-residue chain is UDP-N-acetylmuramate--L-alanyl-gamma-D-glutamyl-meso-2,6-diaminoheptandioate ligase (453 aa).

Residue 111–117 (GTHGKTT) participates in ATP binding.

This sequence belongs to the MurCDEF family. Mpl subfamily. Requires Mg(2+) as cofactor.

It catalyses the reaction UDP-N-acetyl-alpha-D-muramate + L-alanyl-gamma-D-glutamyl-meso-2,6-diaminopimelate + ATP = UDP-N-acetyl-alpha-D-muramoyl-L-alanyl-gamma-D-glutamyl-meso-2,6-diaminopimelate + ADP + phosphate + H(+). It functions in the pathway cell wall biogenesis; peptidoglycan recycling. Functionally, reutilizes the intact tripeptide L-alanyl-gamma-D-glutamyl-meso-diaminopimelate by linking it to UDP-N-acetylmuramate. The polypeptide is UDP-N-acetylmuramate--L-alanyl-gamma-D-glutamyl-meso-2,6-diaminoheptandioate ligase (Haemophilus influenzae (strain ATCC 51907 / DSM 11121 / KW20 / Rd)).